Reading from the N-terminus, the 406-residue chain is Glycosylated lysosomal membrane protein (406 aa).

A signal peptide spans 1-35; the sequence is MRGSVECTWGWGHCAPSPLLLWTLLLFAAPFGLLG. At 36–372 the chain is on the lumenal side; it reads EKTRQVSLEV…VDGLSPLVLG (337 aa). 5 N-linked (GlcNAc...) asparagine glycosylation sites follow: N65, N134, N159, N187, and N230. Residues 373–393 traverse the membrane as a helical segment; it reads IMAVALGAPGLMLLGGGLVLL. The Cytoplasmic portion of the chain corresponds to 394-406; it reads LHHKKYSEYQSIN. The Lysosomal targeting motif motif lies at 402-406; the sequence is YQSIN.

The protein belongs to the GLMP family. As to quaternary structure, interacts (via lumenal domain) with lysosomal protein MFSD1; the interaction starts while both proteins are still in the endoplasmic reticulum and is required for stabilization of MFSD1 in lysosomes but has no direct effect on its targeting to lysosomes or transporter activity. Post-translationally, highly N-glycosylated. N-glycosylation is essential for GLMP stability and for MFSD1 lysosomal localization.

The protein localises to the lysosome membrane. Required to protect lysosomal transporter MFSD1 from lysosomal proteolysis and for MFSD1 lysosomal localization. The polypeptide is Glycosylated lysosomal membrane protein (Homo sapiens (Human)).